A 288-amino-acid polypeptide reads, in one-letter code: Probable ketoamine kinase PM0587 (288 aa).

Position 92–94 (92–94) interacts with ATP; that stretch reads EAL.

The protein belongs to the fructosamine kinase family.

Functionally, ketoamine kinase that phosphorylates ketoamines on the third carbon of the sugar moiety to generate ketoamine 3-phosphate. In Pasteurella multocida (strain Pm70), this protein is Probable ketoamine kinase PM0587.